Reading from the N-terminus, the 791-residue chain is Phosphoenolpyruvate synthase (791 aa).

T416 bears the Phosphothreonine mark. Catalysis depends on H418, which acts as the Tele-phosphohistidine intermediate. Substrate contacts are provided by R508, R575, E677, G698, S699, N700, and D701. E677 serves as a coordination point for Mg(2+). D701 provides a ligand contact to Mg(2+). At Y744 the chain carries Phosphotyrosine. The active-site Proton donor is the C748.

It belongs to the PEP-utilizing enzyme family. The cofactor is Mg(2+).

It catalyses the reaction pyruvate + ATP + H2O = phosphoenolpyruvate + AMP + phosphate + 2 H(+). It participates in carbohydrate biosynthesis; gluconeogenesis. Catalyzes the phosphorylation of pyruvate to phosphoenolpyruvate. The polypeptide is Phosphoenolpyruvate synthase (ppsA) (Pseudomonas aeruginosa (strain UCBPP-PA14)).